The sequence spans 583 residues: MKRSMYAGRVRSEHIGTSITLKGWVGRRRDLGGLIFIDLRDREGIMQLVINPEEVSASVMATAESLRSEFVIEVSGVVTAREQANDNLPTGEVELKVQELSILNTSKTTPFEIKDGIEANDDTRMRYRYLDLRRPEMLENFKLRAKVTHSIRNYLDNLEFIDVETPMLTKSTPEGARDYLVPSRVNQGHFYALPQSPQITKQLLMNAGFDRYYQIVKCFRDEDLRGDRQPEFTQVDLETSFLSDQEIQDIVEGMIAKVMKDTKGLEVSLPFPRMAYDDAMNNYGSDKPDTRFDMLLQDLTEIVKEVDFKVFSEASVVKAIVVKDKADKYSRKNIDKLTEIAKQYGAKGLAWLKYADNTISGPVAKFLTAIEGRLTEALQLENNDLILFVADSLEVANETLGALRTRIAKELELIDYSKFNFLWVVDWPMFEWSEEEGRYMSAHHPFTLPTAETAHELEGDLAKVRAVAYDIVLNGYELGGGSLRINQKDTQERMFKALGFSAESAQEQFGFLLEAMDYGFPPHGGLAIGLDRFVMLLAGKDNIREVIAFPKNNKASDPMTQAPSLVSEQQLEELSLTVESYEN.

Position 174 (Glu-174) interacts with L-aspartate. An aspartate region spans residues 198–201; sequence QITK. Residue Arg-220 participates in L-aspartate binding. Residues 220-222 and Gln-229 contribute to the ATP site; that span reads RDE. His-443 contacts L-aspartate. Glu-477 contacts ATP. Arg-484 lines the L-aspartate pocket. 529–532 lines the ATP pocket; sequence GLDR.

It belongs to the class-II aminoacyl-tRNA synthetase family. Type 1 subfamily. As to quaternary structure, homodimer.

Its subcellular location is the cytoplasm. It carries out the reaction tRNA(Asp) + L-aspartate + ATP = L-aspartyl-tRNA(Asp) + AMP + diphosphate. In terms of biological role, catalyzes the attachment of L-aspartate to tRNA(Asp) in a two-step reaction: L-aspartate is first activated by ATP to form Asp-AMP and then transferred to the acceptor end of tRNA(Asp). This chain is Aspartate--tRNA ligase, found in Streptococcus agalactiae serotype V (strain ATCC BAA-611 / 2603 V/R).